The following is a 272-amino-acid chain: Shikimate dehydrogenase (NADP(+)) (272 aa).

Shikimate-binding positions include 14–16 (SKS) and Thr-61. Lys-65 (proton acceptor) is an active-site residue. Position 77 (Glu-77) interacts with NADP(+). Shikimate contacts are provided by Asn-86 and Asp-102. Residues 126-130 (GAGGA), 149-154 (NRTVSR), and Met-213 each bind NADP(+). Shikimate is bound at residue Tyr-215. Gly-237 provides a ligand contact to NADP(+).

This sequence belongs to the shikimate dehydrogenase family. Homodimer.

It catalyses the reaction shikimate + NADP(+) = 3-dehydroshikimate + NADPH + H(+). It functions in the pathway metabolic intermediate biosynthesis; chorismate biosynthesis; chorismate from D-erythrose 4-phosphate and phosphoenolpyruvate: step 4/7. In terms of biological role, involved in the biosynthesis of the chorismate, which leads to the biosynthesis of aromatic amino acids. Catalyzes the reversible NADPH linked reduction of 3-dehydroshikimate (DHSA) to yield shikimate (SA). The polypeptide is Shikimate dehydrogenase (NADP(+)) (Escherichia coli (strain K12 / MC4100 / BW2952)).